The chain runs to 258 residues: DNA repair protein RecO (258 aa).

Belongs to the RecO family.

Functionally, involved in DNA repair and RecF pathway recombination. The protein is DNA repair protein RecO of Syntrophotalea carbinolica (strain DSM 2380 / NBRC 103641 / GraBd1) (Pelobacter carbinolicus).